A 386-amino-acid polypeptide reads, in one-letter code: Succinate--CoA ligase [ADP-forming] subunit beta (386 aa).

Positions 9–244 (KDLLTAYQLP…PSQENIRDVL (236 aa)) constitute an ATP-grasp domain. Residues Lys46, 53 to 55 (GRG), Val102, and Glu107 each bind ATP. The Mg(2+) site is built by Asn199 and Asp213. Residues Asn264 and 321-323 (GIM) contribute to the substrate site.

This sequence belongs to the succinate/malate CoA ligase beta subunit family. In terms of assembly, heterotetramer of two alpha and two beta subunits. Mg(2+) serves as cofactor.

It carries out the reaction succinate + ATP + CoA = succinyl-CoA + ADP + phosphate. The enzyme catalyses GTP + succinate + CoA = succinyl-CoA + GDP + phosphate. It functions in the pathway carbohydrate metabolism; tricarboxylic acid cycle; succinate from succinyl-CoA (ligase route): step 1/1. Functionally, succinyl-CoA synthetase functions in the citric acid cycle (TCA), coupling the hydrolysis of succinyl-CoA to the synthesis of either ATP or GTP and thus represents the only step of substrate-level phosphorylation in the TCA. The beta subunit provides nucleotide specificity of the enzyme and binds the substrate succinate, while the binding sites for coenzyme A and phosphate are found in the alpha subunit. The chain is Succinate--CoA ligase [ADP-forming] subunit beta from Chlamydia trachomatis serovar A (strain ATCC VR-571B / DSM 19440 / HAR-13).